The primary structure comprises 215 residues: MGVRAQQKEKTRRSLVEAAFSQLSAERSFASLSLREVAREAVIAPTSFYRHFRDVDELGLTMVDESGLMLRQLMRQARQRIAKGGSVIRTSVSTFMEFIGNNPNAFRLLLRERSGTSAAFRAAVAREIQHFIAELADYLELENHMPRAFTEAQAEAMVTIVFSAGAEALDVGVEQRRQLEERLVLQLRMISKGAYYWYRREQEKTAIIPGNVKDE.

One can recognise an HTH tetR-type domain in the interval 10 to 70; it reads KTRRSLVEAA…TMVDESGLML (61 aa). Residues 33-52 constitute a DNA-binding region (H-T-H motif); sequence SLREVAREAVIAPTSFYRHF.

As to quaternary structure, homodimer.

It localises to the cytoplasm. In terms of biological role, represses the transcription of fabB, involved in unsaturated fatty acid (UFA) biosynthesis. By controlling UFA production, FabR directly influences the physical properties of the membrane bilayer. The protein is HTH-type transcriptional repressor FabR of Escherichia coli (strain K12 / MC4100 / BW2952).